A 219-amino-acid chain; its full sequence is uncharacterized protein (219 aa).

The active site involves D58.

It belongs to the pseudouridine synthase RluA family.

It carries out the reaction a uridine in RNA = a pseudouridine in RNA. This is an uncharacterized protein from Zymomonas mobilis subsp. mobilis (strain ATCC 31821 / ZM4 / CP4).